The following is a 676-amino-acid chain: Lutropin-choriogonadotropic hormone receptor (676 aa).

An N-terminal signal peptide occupies residues 1–29 (MKQPLLALQLLKLLLLLLLPLPPLPRALR). Topologically, residues 30-340 (EARCCPEPCN…EDIMGYDFLR (311 aa)) are extracellular. Residue Asn103 is glycosylated (N-linked (GlcNAc...) asparagine). LRR repeat units lie at residues 126–151 (LPRLKYLSICNTGIRKFPDVTKIFSS), 153–175 (TNFILEICDNLHITTIPGNAFQG), 176–200 (MNNESITLKLYGNGFEEVQSHAFNG), 201–224 (TTVISLVLKENVHLERIHNGAFRG), and 225–248 (ATGPSILDISSTKLQALPSHGLES). N-linked (GlcNAc...) asparagine glycans are attached at residues Asn178 and Asn199. The residue at position 308 (Tyr308) is a Sulfotyrosine. The helical transmembrane segment at 341–362 (VLIWLINILAIMGNMTVLFVLL) threads the bilayer. The Cytoplasmic segment spans residues 363–372 (TSRYKLTVPR). Residues 373–393 (FLMCNLSFADFCMGLYLLLIA) traverse the membrane as a helical segment. Residues 394–416 (SVDSQTKGQYYNHAIDWQTGSGC) are Extracellular-facing. Cys416 and Cys491 are disulfide-bonded. A helical transmembrane segment spans residues 417–439 (NTAGFFTVFASELSVYTLTVITL). The Cytoplasmic segment spans residues 440–459 (ERWHTITYAIHLDQKLRLRH). A helical membrane pass occupies residues 460–482 (AILIMLGGWLFSSLIAMLPLVGV). Residues 483–502 (SNYMKVSICFPMDVETTLSQ) lie on the Extracellular side of the membrane. Residues 503–526 (IYILTILILNVVAFIIICACYIKI) traverse the membrane as a helical segment. The Cytoplasmic segment spans residues 527-547 (YFAVRNPELMATNKDTKIAKK). A helical transmembrane segment spans residues 548–571 (MAILIFTDFTCMAPISFFAISAAF). The Extracellular segment spans residues 572-582 (KMPLITVTNSK). The helical transmembrane segment at 583 to 604 (VLLVLFYPINSCANPFLYAIFT) threads the bilayer. Residues 605–676 (KTFRRDFFLL…LLDKTCYKEY (72 aa)) lie on the Cytoplasmic side of the membrane. 2 S-palmitoyl cysteine lipidation sites follow: Cys620 and Cys621.

The protein belongs to the G-protein coupled receptor 1 family. FSH/LSH/TSH subfamily. In terms of processing, sulfated.

The protein localises to the cell membrane. In terms of biological role, receptor for lutropin-choriogonadotropic hormone. The activity of this receptor is mediated by G proteins which activate adenylate cyclase. The sequence is that of Lutropin-choriogonadotropic hormone receptor (LHCGR) from Callithrix jacchus (White-tufted-ear marmoset).